The sequence spans 117 residues: Big defensin (117 aa).

The signal sequence occupies residues 1–23; the sequence is MEKKTAYCLLFLVLLVPYTALGA. Residues 24–33 constitute a propeptide that is removed on maturation; sequence VLKRAPAKKE. 3 disulfide bridges follow: Cys82–Cys112, Cys89–Cys107, and Cys93–Cys113.

Belongs to the big defensin family.

It localises to the secreted. In terms of biological role, significantly inhibits the growth of Gram-negative and Gram-positive bacteria and fungi in vitro. The protein is Big defensin of Branchiostoma belcheri (Amphioxus).